Reading from the N-terminus, the 357-residue chain is Homoserine O-succinyltransferase (357 aa).

The Acyl-thioester intermediate role is filled by Cys146. Positions 167 and 196 each coordinate substrate. His239 acts as the Proton acceptor in catalysis. Glu241 is a catalytic residue. Arg253 is a substrate binding site.

This sequence belongs to the MetA family.

It is found in the cytoplasm. The catalysed reaction is L-homoserine + succinyl-CoA = O-succinyl-L-homoserine + CoA. It participates in amino-acid biosynthesis; L-methionine biosynthesis via de novo pathway; O-succinyl-L-homoserine from L-homoserine: step 1/1. In terms of biological role, transfers a succinyl group from succinyl-CoA to L-homoserine, forming succinyl-L-homoserine. This chain is Homoserine O-succinyltransferase, found in Allochromatium vinosum (strain ATCC 17899 / DSM 180 / NBRC 103801 / NCIMB 10441 / D) (Chromatium vinosum).